A 374-amino-acid polypeptide reads, in one-letter code: MEHVDSPLYLGLMSGTSADGIDAALVRFADDTHRRCELVAGTTVAWEPQLRETLVALGQGAETVAIDALGQLDAQVGLAFAAAANQLIGDSGVERRQIRAIGSHGQTIRHRPNASPAFTWQIGDASRIAEHTGITTVADFRRRDVAAGGQGAPLMPAFHLAMLGAGDEDRAVLNLGGIGNLTLIPRDGAVRGFDTGPANALLDSWCQRHHGTPFDADGAFAASGRVDAALLQALLADPWFALPPPKSTGREQFHLDWAVQAMGNARLDAADVQATLLELTAASVADALLRLQPTTRRVLVCGGGVRNPVLLARLAARLPGAMVESSARYGLDPDYLEAMGFAWLAAELLAGRAANLPSVTGAAGPRLLGAIYPA.

15–22 (GTSADGID) contacts ATP.

It belongs to the anhydro-N-acetylmuramic acid kinase family.

The catalysed reaction is 1,6-anhydro-N-acetyl-beta-muramate + ATP + H2O = N-acetyl-D-muramate 6-phosphate + ADP + H(+). It functions in the pathway amino-sugar metabolism; 1,6-anhydro-N-acetylmuramate degradation. It participates in cell wall biogenesis; peptidoglycan recycling. Catalyzes the specific phosphorylation of 1,6-anhydro-N-acetylmuramic acid (anhMurNAc) with the simultaneous cleavage of the 1,6-anhydro ring, generating MurNAc-6-P. Is required for the utilization of anhMurNAc either imported from the medium or derived from its own cell wall murein, and thus plays a role in cell wall recycling. This is Anhydro-N-acetylmuramic acid kinase from Xanthomonas axonopodis pv. citri (strain 306).